The following is a 138-amino-acid chain: Rubber elongation factor protein (138 aa).

A2 is subject to N-acetylalanine.

This sequence belongs to the REF/SRPP family. In solution, able to form amyloid fibers and aggregates rich in beta-sheets. Interaction with membrane stabilizes the protein, inhibiting the amyloid state and aggregation. In terms of processing, not glycosylated. In terms of tissue distribution, localized in all laticifer layers.

The protein localises to the cytoplasm. Its function is as follows. May be part of the rubber biosynthesis machinery. Plays a role in rubber elongation. In Hevea brasiliensis (Para rubber tree), this protein is Rubber elongation factor protein.